The sequence spans 283 residues: Short-chain dehydrogenase cctT (283 aa).

Residues 1 to 20 (MLKTVLITGCSHGGLGAAMA) form the signal peptide. Positions 7, 33, 39, 55, and 83 each coordinate NADP(+). An N-linked (GlcNAc...) asparagine glycan is attached at Asn-131. Ser-133 acts as the Proton donor in catalysis. 4 residues coordinate NADP(+): Tyr-147, Arg-151, Val-180, and Thr-182. Tyr-147 serves as the catalytic Proton acceptor.

It belongs to the short-chain dehydrogenases/reductases (SDR) family.

Its function is as follows. Short-chain dehydrogenase; part of the gene cluster that mediates the biosynthesis of the mycotoxin cyclochlorotine, a hepatotoxic and carcinogenic cyclic chlorinated pentapeptide. The function of cctT within the pathway, if any, remains undetermined. The NRPS cctN initially catalyzes the condensation of L-serine (Ser), Pro, L-2-aminobutyrate (2Abu), Ser, and beta-Phe in this order to produce isocyclotine. After the dichlorination of Pro2 catalyzed by cctP2 to produce isocyclochlorotine, the cctO-mediated transacylation of isocyclochlorotine can furnish cyclochlorotine. The subsequent hydroxylation of cyclochlorotine by cctR yields hydroxycyclochlorotine as the final product. CctP1 probably acts as a phenylalanine aminomutase and provides the uncommon building block beta-Phe. Furthermore, 2Abu can be synthesized from threonine by one of the threonine dehydratases and transaminases localized outside of the cluster. The functions of the remaining proteins encoded by the cluster, cctM and cctT, have not been identified yet. This is Short-chain dehydrogenase cctT from Talaromyces islandicus (Penicillium islandicum).